An 885-amino-acid polypeptide reads, in one-letter code: Cytosolic carboxypeptidase-like protein 5 (885 aa).

One can recognise a Peptidase M14 domain in the interval 157–570; sequence YPFSYSDCQD…AMAIAALDMA (414 aa). Residues His252 and Glu255 each contribute to the Zn(2+) site. Residues 343 to 402 form a disordered region; it reads NSQSPSEHQHSSHLPPDAPLSDPEKADSLQNRAHLGRSSSGDKPEAWTQTEVAEQKPNSV. Polar residues predominate over residues 388–402; that stretch reads AWTQTEVAEQKPNSV. His434 is a Zn(2+) binding site. The active-site Proton donor/acceptor is Glu516. Disordered regions lie at residues 605–733 and 783–839; these read TTVN…LASS and RLQA…PRPC. Residues 620–640 are compositionally biased toward polar residues; the sequence is PPRSNNGLPVSCSENTLSRAR. Low complexity-rich tracts occupy residues 641–666 and 714–733; these read SFST…NSPS and PTSS…LASS. Residue Ser840 is modified to Phosphoserine.

This sequence belongs to the peptidase M14 family. It depends on Zn(2+) as a cofactor.

Its subcellular location is the cytoplasm. It localises to the cytosol. The protein resides in the nucleus. The protein localises to the cytoskeleton. It is found in the spindle. Its subcellular location is the midbody. The catalysed reaction is gamma-L-glutamyl-L-glutamyl-[protein] + H2O = L-glutamyl-[protein] + L-glutamate. It carries out the reaction (L-glutamyl)(n+1)-gamma-L-glutamyl-L-glutamyl-[protein] + H2O = (L-glutamyl)(n)-gamma-L-glutamyl-L-glutamyl-[protein] + L-glutamate. It catalyses the reaction C-terminal L-alpha-aminoacyl-L-glutamyl-[tubulin] + H2O = C-terminal L-alpha-aminoacyl-[tubulin] + L-glutamate. The enzyme catalyses C-terminal L-alpha-aminoacyl-L-glutamyl-L-glutamyl-[tubulin] + H2O = C-terminal L-alpha-aminoacyl-L-glutamyl-[tubulin] + L-glutamate. Its function is as follows. Metallocarboxypeptidase that mediates deglutamylation of tubulin and non-tubulin target proteins. Catalyzes the removal of polyglutamate side chains present on the gamma-carboxyl group of glutamate residues within the C-terminal tail of alpha- and beta-tubulin. Cleaves alpha- and gamma-linked polyglutamate tubulin side-chain, as well as the branching point glutamate. Also catalyzes the removal of alpha-linked glutamate residues from the carboxy-terminus of alpha-tubulin. Mediates deglutamylation of nucleotidyltransferase CGAS, leading to CGAS antiviral defense response activation. The polypeptide is Cytosolic carboxypeptidase-like protein 5 (AGBL5) (Bos taurus (Bovine)).